The sequence spans 714 residues: Polyribonucleotide nucleotidyltransferase (714 aa).

Mg(2+) contacts are provided by Asp-488 and Asp-494. Residues 555-614 enclose the KH domain; the sequence is PRIEVMNIPTDKIRDVIGSGGKVIREIVEKTGAKINIEDDGTVKIASSNGKEIEAAKKWI. One can recognise an S1 motif domain in the interval 624-692; sequence GEIYEGTVVK…ERGKVRLSMK (69 aa).

It belongs to the polyribonucleotide nucleotidyltransferase family. The cofactor is Mg(2+).

It is found in the cytoplasm. It catalyses the reaction RNA(n+1) + phosphate = RNA(n) + a ribonucleoside 5'-diphosphate. In terms of biological role, involved in mRNA degradation. Catalyzes the phosphorolysis of single-stranded polyribonucleotides processively in the 3'- to 5'-direction. In Brucella melitensis biotype 2 (strain ATCC 23457), this protein is Polyribonucleotide nucleotidyltransferase.